We begin with the raw amino-acid sequence, 488 residues long: Malonate-semialdehyde dehydrogenase (488 aa).

Positions 150, 152, 176, 179, 180, 229, and 251 each coordinate NAD(+). Cys284 acts as the Nucleophile in catalysis. Glu382 contacts NAD(+).

The protein belongs to the aldehyde dehydrogenase family. IolA subfamily. Homotetramer.

The enzyme catalyses 3-oxopropanoate + NAD(+) + CoA + H2O = hydrogencarbonate + acetyl-CoA + NADH + H(+). The catalysed reaction is 2-methyl-3-oxopropanoate + NAD(+) + CoA + H2O = propanoyl-CoA + hydrogencarbonate + NADH + H(+). It functions in the pathway polyol metabolism; myo-inositol degradation into acetyl-CoA; acetyl-CoA from myo-inositol: step 7/7. Catalyzes the oxidation of malonate semialdehyde (MSA) and methylmalonate semialdehyde (MMSA) into acetyl-CoA and propanoyl-CoA, respectively. Is involved in a myo-inositol catabolic pathway. Bicarbonate, and not CO2, is the end-product of the enzymatic reaction. In Listeria monocytogenes serovar 1/2a (strain ATCC BAA-679 / EGD-e), this protein is Malonate-semialdehyde dehydrogenase.